The chain runs to 360 residues: Peptide chain release factor 1 (360 aa).

Position 235 is an N5-methylglutamine (Q235).

This sequence belongs to the prokaryotic/mitochondrial release factor family. Post-translationally, methylated by PrmC. Methylation increases the termination efficiency of RF1.

It is found in the cytoplasm. Functionally, peptide chain release factor 1 directs the termination of translation in response to the peptide chain termination codons UAG and UAA. In Paracidovorax citrulli (strain AAC00-1) (Acidovorax citrulli), this protein is Peptide chain release factor 1.